A 597-amino-acid polypeptide reads, in one-letter code: Sialic acid-binding Ig-like lectin 12 (597 aa).

Positions 1-20 (MLLLLLLLLLPPLLCGRVGA) are cleaved as a signal peptide. Ig-like V-type domains follow at residues 21–144 (KEQK…VNVT) and 145–271 (ASQD…VHVT). Over 21 to 483 (KEQKDYLLTM…RPISGVTLGA (463 aa)) the chain is Extracellular. A disulfide bond links Cys46 and Cys106. 4 N-linked (GlcNAc...) asparagine glycosylation sites follow: Asn142, Asn181, Asn232, and Asn292. Disulfide bonds link Cys168–Cys301, Cys173–Cys233, and Cys295–Cys344. One can recognise an Ig-like C2-type 1 domain in the interval 277-360 (PTFSIPGTLE…AGVTTTRAVR (84 aa)). N-linked (GlcNAc...) asparagine glycosylation is found at Asn362, Asn369, and Asn387. The 98-residue stretch at 367-464 (PQNLTMTVFQ…GSQHISLSLS (98 aa)) folds into the Ig-like C2-type 2 domain. A disulfide bond links Cys403 and Cys448. The chain crosses the membrane as a helical span at residues 484 to 504 (VGGAGATALVFLSFCIIFVVV). The Cytoplasmic segment spans residues 505-597 (RSCRKKSARP…YEYSEINILK (93 aa)). Residues 514 to 558 (PAVGVGDTGMEDTNAVRGSASQGPLIESPADDSPPHHAPPALATP) form a disordered region. An ITIM motif motif is present at residues 565–570 (IQYASL). Phosphotyrosine is present on residues Tyr567 and Tyr590. The short motif at 588 to 593 (YEYSEI) is the SLAM-like motif element.

It belongs to the immunoglobulin superfamily. SIGLEC (sialic acid binding Ig-like lectin) family.

It is found in the membrane. Putative adhesion molecule that mediates sialic-acid dependent binding to cells. The sialic acid recognition site may be masked by cis interactions with sialic acids on the same cell surface. This is Sialic acid-binding Ig-like lectin 12 (SIGLEC12) from Pan troglodytes (Chimpanzee).